A 3678-amino-acid polypeptide reads, in one-letter code: Dystrophin (3678 aa).

The tract at residues 1-240 (MLWWEEVEDC…YITSLFQVLP (240 aa)) is actin-binding. Calponin-homology (CH) domains are found at residues 15–119 (DVQK…LHWQ) and 134–240 (TNSE…QVLP). The interval 63 to 72 (PKEKGSTRVH) is ANK2- and ANK-3 binding. The tract at residues 313 to 333 (DSTQSPYPSQHLEAPRDKSLD) is disordered. Spectrin repeat units lie at residues 341–449 (VNLD…KLHK), 450–558 (VLMD…VLQD), 561–669 (LKWQ…QISQ), 721–830 (ELRK…WLEY), 832–936 (TNII…ELQT), 945–1047 (RYQE…KLEE), 1050–1156 (NKLR…ALKA), 1159–1265 (DKTV…TLEE), 1268–1369 (ACWH…LLEQ), 1370–1465 (SIQS…LFQK), 1470–1570 (EQRL…QLEK), 1573–1678 (KLSR…LLLE), 1681–1780 (KHME…KASI), 1781–1876 (PLKE…KALE), 1879–1981 (HQWY…TLHE), 1994–2103 (DVSY…RFDR), 2106–2210 (EKWR…RIEE), 2213–2318 (NVLS…ELEV), 2319–2416 (HLKD…LRTK), 2468–2570 (FNRA…QLNE), 2573–2679 (KDST…ALEE), 2682–2795 (RLLQ…HLEA), 2801–2923 (KRLH…RKID), and 2928–3033 (RLQE…QLHE). Residues 1417-1915 (SDLTSHEISL…PEPRDERKLK (499 aa)) are interaction with SYNM. The region spanning 3048-3081 (TSVQGPWERAISPNKVPYYINHETQTTCWDHPKM) is the WW domain. The tract at residues 3051–3401 (QGPWERAISP…TVLEGDNMET (351 aa)) is interaction with SYNM. A ZZ-type; degenerate zinc finger spans residues 3301-3357 (KHQAKCNICKECPIIGFRYRSLKHFNYDICQSCFFSGRVAKGHKMHYPMVEYCTPTT). 4 residues coordinate Zn(2+): C3306, C3309, C3330, and C3333. Residues 3459–3511 (DDEHLLIQHYCQSLNQDSPLSQPRSPAQILISLESEERGELERILADLEEENR) are binds to SNTB1. Phosphoserine occurs at positions 3476, 3483, and 3493. Disordered regions lie at residues 3521 to 3547 (KQQH…QSPR) and 3596 to 3678 (EAKV…EDTM). Polar residues-rich tracts occupy residues 3600 to 3619 (NGTT…SSQP) and 3655 to 3665 (QLNNSFPSSRG). 6 positions are modified to phosphoserine: S3605, S3606, S3610, S3616, S3617, and S3659.

Interacts with SYNM. Interacts with the syntrophins SNTG1 and SNTG2. Interacts with KRT19. Component of the dystrophin-associated glycoprotein complex which is composed of three subcomplexes: a cytoplasmic complex comprised of DMD (or UTRN), DTNA and a number of syntrophins, such as SNTB1, SNTB2, SNTG1 and SNTG2, the transmembrane dystroglycan complex, and the sarcoglycan-sarcospan complex. Interacts with DAG1 (betaDAG1) with DMD; the interaction is inhibited by phosphorylation on the PPXY motif of DAG1. Interacts with SYNM; SNTA1 and SNTB1. Interacts with CMYA5. Directly interacts with ANK2 and ANK3; these interactions do not interfere with betaDAG1-binding and are necessary for proper localization in muscle cells. Identified in a dystroglycan complex that contains at least PRX, DRP2, UTRN, DMD and DAG1. Interacts with DTNB. Interacts with PGM5; the interaction is direct. Interacts with NOS1; localizes NOS1 to sarcolemma in muscle cells. Detected in quadriceps muscle and in sciatic nerve (at protein level). Expressed in the sarcolemma of the soleus muscle (at protein level). Differentially expressed during skeletal muscle, heart, and brain development. Also expressed in retina.

The protein localises to the cell membrane. It localises to the sarcolemma. It is found in the cytoplasm. Its subcellular location is the cytoskeleton. The protein resides in the postsynaptic cell membrane. Functionally, anchors the extracellular matrix to the cytoskeleton via F-actin. Ligand for dystroglycan. Component of the dystrophin-associated glycoprotein complex which accumulates at the neuromuscular junction (NMJ) and at a variety of synapses in the peripheral and central nervous systems and has a structural function in stabilizing the sarcolemma. Also implicated in signaling events and synaptic transmission. In Mus musculus (Mouse), this protein is Dystrophin (Dmd).